A 234-amino-acid polypeptide reads, in one-letter code: 2-hydroxy-3-keto-5-methylthiopentenyl-1-phosphate phosphatase (234 aa).

This sequence belongs to the HAD-like hydrolase superfamily. MtnX family.

It carries out the reaction 2-hydroxy-5-methylsulfanyl-3-oxopent-1-enyl phosphate + H2O = 1,2-dihydroxy-5-(methylsulfanyl)pent-1-en-3-one + phosphate. It participates in amino-acid biosynthesis; L-methionine biosynthesis via salvage pathway; L-methionine from S-methyl-5-thio-alpha-D-ribose 1-phosphate: step 4/6. Dephosphorylates 2-hydroxy-3-keto-5-methylthiopentenyl-1-phosphate (HK-MTPenyl-1-P) yielding 1,2-dihydroxy-3-keto-5-methylthiopentene (DHK-MTPene). In Bacillus velezensis (strain DSM 23117 / BGSC 10A6 / LMG 26770 / FZB42) (Bacillus amyloliquefaciens subsp. plantarum), this protein is 2-hydroxy-3-keto-5-methylthiopentenyl-1-phosphate phosphatase.